Reading from the N-terminus, the 228-residue chain is uncharacterized protein (228 aa).

Positions 196–228 form a coiled coil; sequence VKITELLDKAKISINDLNKTIEKLNETVNKYHG.

This is an uncharacterized protein from Acanthamoeba polyphaga (Amoeba).